Consider the following 408-residue polypeptide: Bone morphogenetic protein 4 (408 aa).

The signal sequence occupies residues 1 to 19 (MIPGNRMLMVVLLCQVLLG). A propeptide spanning residues 20–292 (GATDASLIPE…HTLTRRRAKR (273 aa)) is cleaved from the precursor. Ser-91 carries the post-translational modification Phosphoserine. A disordered region spans residues 91–113 (SGEEEEEEQSQGTGLEYPERPAS). Asn-144 and Asn-209 each carry an N-linked (GlcNAc...) asparagine glycan. Positions 281–307 (RGHTLTRRRAKRSPKHHPQRSRKKNKN) are disordered. Residues 284–307 (TLTRRRAKRSPKHHPQRSRKKNKN) are compositionally biased toward basic residues. 3 cysteine pairs are disulfide-bonded: Cys-308–Cys-373, Cys-337–Cys-405, and Cys-341–Cys-407. Asn-350 and Asn-365 each carry an N-linked (GlcNAc...) asparagine glycan.

It belongs to the TGF-beta family. In terms of assembly, homodimer; disulfide-linked. Interacts with GREM2. Part of a complex consisting of TWSG1 and CHRD. Interacts with the serine proteases, HTRA1 and HTRA3; the interaction with either inhibits BMP4-mediated signaling. The HTRA protease activity is required for this inhibition. Interacts with SOSTDC1. Interacts with FBN1 (via N-terminal domain) and FBN2. Interacts with type I receptor BMPR1A. Interacts with type II receptor BMPR2. Interacts with FSTL1; this interaction inhibits the activation of the BMP4/Smad1/5/8 signaling pathway. Interacts with SCUBE3. Interacts with TGFBR3.

It is found in the secreted. Its subcellular location is the extracellular space. The protein resides in the extracellular matrix. Functionally, growth factor of the TGF-beta superfamily that plays essential roles in many developmental processes, including neurogenesis, vascular development, angiogenesis and osteogenesis. Acts in concert with PTHLH/PTHRP to stimulate ductal outgrowth during embryonic mammary development and to inhibit hair follicle induction. Initiates the canonical BMP signaling cascade by associating with type I receptor BMPR1A and type II receptor BMPR2. Once all three components are bound together in a complex at the cell surface, BMPR2 phosphorylates and activates BMPR1A. In turn, BMPR1A propagates signal by phosphorylating SMAD1/5/8 that travel to the nucleus and act as activators and repressors of transcription of target genes. Positively regulates the expression of odontogenic development regulator MSX1 via inducing the IPO7-mediated import of SMAD1 to the nucleus. Required for MSX1-mediated mesenchymal molar tooth bud development beyond the bud stage, via promoting Wnt signaling. Acts as a positive regulator of odontoblast differentiation during mesenchymal tooth germ formation, expression is repressed during the bell stage by MSX1-mediated inhibition of CTNNB1 signaling. Able to induce its own expression in dental mesenchymal cells and also in the neighboring dental epithelial cells via an MSX1-mediated pathway. Can also signal through non-canonical BMP pathways such as ERK/MAP kinase, PI3K/Akt, or SRC cascades. For example, induces SRC phosphorylation which, in turn, activates VEGFR2, leading to an angiogenic response. The protein is Bone morphogenetic protein 4 of Rattus norvegicus (Rat).